Here is a 202-residue protein sequence, read N- to C-terminus: Potassium-transporting ATPase KdpC subunit (202 aa).

Residues Pro-7–Met-27 form a helical membrane-spanning segment. Residues Phe-66–Ser-103 are disordered. Polar residues-rich tracts occupy residues Ser-71 to Thr-84 and Ala-91 to Pro-101.

Belongs to the KdpC family. In terms of assembly, the system is composed of three essential subunits: KdpA, KdpB and KdpC.

Its subcellular location is the cell inner membrane. Functionally, part of the high-affinity ATP-driven potassium transport (or Kdp) system, which catalyzes the hydrolysis of ATP coupled with the electrogenic transport of potassium into the cytoplasm. This subunit acts as a catalytic chaperone that increases the ATP-binding affinity of the ATP-hydrolyzing subunit KdpB by the formation of a transient KdpB/KdpC/ATP ternary complex. The protein is Potassium-transporting ATPase KdpC subunit of Bradyrhizobium sp. (strain ORS 278).